A 1187-amino-acid polypeptide reads, in one-letter code: Roquin-2 (1187 aa).

7 residues coordinate Zn(2+): C14, C17, C33, H35, C38, C50, and D53. Residues 14–54 form an RING-type; degenerate zinc finger; that stretch reads CPICYNEFDENVHKPISLGCSHTVCKTCLNKLHRKACPFDQ. Residues 91–170 are HEPN-N; that stretch reads ENKHYEVAKK…RTVTELILQH (80 aa). Residues 171 to 325 form an ROQ region; it reads QNPQQLSANL…SIIDKLQSPE (155 aa). The tract at residues 326-396 is HEPN-C; that stretch reads SFAKSVQELT…GLVDFIQNYS (71 aa). A C3H1-type zinc finger spans residues 410 to 438; sequence KYKTSMCRDLRQQGGCPRGTNCTFAHSQE. Disordered regions lie at residues 527 to 571 and 640 to 677; these read VGTN…GTEL and NVPE…PPPQ. Over residues 529-545 the composition is skewed to polar residues; sequence TNAQNAGPSAESVSENK. S548 is modified (phosphoserine). Positions 553–571 are enriched in polar residues; that stretch reads PVSNAAATSAGPSNFGTEL. Residues S806, S981, and S1115 each carry the phosphoserine modification.

In terms of assembly, interacts with EDC4. Interacts with CCR4-NOT deadenylase complex. Interacts with MAP3K5; the interaction is probably stimulus-dependent. Post-translationally, proteolytically cleaved by MALT1 in activated CD4(+) T cells; cleavage at Arg-509 is critical for promoting RC3H1 degradation in response to T-cell receptor (TCR) stimulation, and hence is necessary for prolonging the stability of a set of mRNAs controlling Th17 cell differentiation. As to expression, highest levels in lymph node and thymus and slightly lesser amounts in brain, lung, and spleen (at protein level). Very weak expression in heart, muscle, and kidney (at protein level). Expressed in CD4(+) helper T-cells (at protein level).

Its subcellular location is the cytoplasm. It localises to the P-body. The catalysed reaction is S-ubiquitinyl-[E2 ubiquitin-conjugating enzyme]-L-cysteine + [acceptor protein]-L-lysine = [E2 ubiquitin-conjugating enzyme]-L-cysteine + N(6)-ubiquitinyl-[acceptor protein]-L-lysine.. The protein operates within protein modification; protein ubiquitination. Binding to dsRNA, but not CDE RNA, crosstalks with the E3 ubiquitin ligase activity and may inhibit ubiquitination. In terms of biological role, post-transcriptional repressor of mRNAs containing a conserved stem loop motif, called constitutive decay element (CDE), which is often located in the 3'-UTR, as in HMGXB3, ICOS, IER3, NFKBID, NFKBIZ, PPP1R10, TNF and in many more mRNAs. Binds to CDE and promotes mRNA deadenylation and degradation. This process does not involve miRNAs. In follicular helper T (Tfh) cells, represses of ICOS and TNFRSF4 expression, thus preventing spontaneous Tfh cell differentiation, germinal center B-cell differentiation in the absence of immunization and autoimmunity. In resting or LPS-stimulated macrophages, controls inflammation by suppressing TNF expression. Also recognizes CDE in its own mRNA and in that of paralogous RC3H1, possibly leading to feedback loop regulation. Inhibits cooperatively with ZC3H12A the differentiation of helper T cells Th17 in lungs. They repress target mRNA encoding the Th17 cell-promoting factors IL6, ICOS, REL, IRF4, NFKBID and NFKBIZ. The cooperation requires RNA-binding by RC3H1 and the nuclease activity of ZC3H12A. miRNA-binding protein that regulates microRNA homeostasis. Enhances DICER-mediated processing of pre-MIR146a but reduces mature MIR146a levels through an increase of 3' end uridylation. Both inhibits ICOS mRNA expression and they may act together to exert the suppression. Acts as a ubiquitin E3 ligase. Pairs with E2 enzymes UBE2B, UBE2D2, UBE2E2, UBE2E3, UBE2G2, UBE2K and UBE2Q2 and produces polyubiquitin chains. Shows the strongest activity when paired with UBE2N:UBE2V1 or UBE2N:UBE2V2 E2 complexes and generate both short and long polyubiquitin chains. Involved in the ubiquitination of MAP3K5. Able to interact with double-stranded RNA (dsRNA). The sequence is that of Roquin-2 (Rc3h2) from Mus musculus (Mouse).